Consider the following 252-residue polypeptide: Phosphate import ATP-binding protein PstB (252 aa).

Residues 6–247 (ITINNLNFYY…PRDKRTEDYI (242 aa)) enclose the ABC transporter domain. Position 38–45 (38–45 (GPSGCGKS)) interacts with ATP.

Belongs to the ABC transporter superfamily. Phosphate importer (TC 3.A.1.7) family. The complex is composed of two ATP-binding proteins (PstB), two transmembrane proteins (PstC and PstA) and a solute-binding protein (PstS).

It is found in the cell membrane. The catalysed reaction is phosphate(out) + ATP + H2O = ADP + 2 phosphate(in) + H(+). Part of the ABC transporter complex PstSACB involved in phosphate import. Responsible for energy coupling to the transport system. The polypeptide is Phosphate import ATP-binding protein PstB (Moorella thermoacetica (strain ATCC 39073 / JCM 9320)).